Consider the following 180-residue polypeptide: Ribulose bisphosphate carboxylase small subunit, chloroplastic (180 aa).

The transit peptide at 1–56 directs the protein to the chloroplast; the sequence is MASSVLSSAAVATRSNVAQANMVAPFTGLKSAASFPVSRKQNLDITSIASNGGRVQ.

The protein belongs to the RuBisCO small chain family. Heterohexadecamer of 8 large and 8 small subunits.

It is found in the plastid. Its subcellular location is the chloroplast. In terms of biological role, ruBisCO catalyzes two reactions: the carboxylation of D-ribulose 1,5-bisphosphate, the primary event in carbon dioxide fixation, as well as the oxidative fragmentation of the pentose substrate. Both reactions occur simultaneously and in competition at the same active site. Although the small subunit is not catalytic it is essential for maximal activity. The protein is Ribulose bisphosphate carboxylase small subunit, chloroplastic of Nicotiana plumbaginifolia (Leadwort-leaved tobacco).